The primary structure comprises 102 residues: Small ribosomal subunit protein uS10 (102 aa).

This sequence belongs to the universal ribosomal protein uS10 family. In terms of assembly, part of the 30S ribosomal subunit.

In terms of biological role, involved in the binding of tRNA to the ribosomes. The chain is Small ribosomal subunit protein uS10 from Frankia alni (strain DSM 45986 / CECT 9034 / ACN14a).